Reading from the N-terminus, the 449-residue chain is MYIKAIMNRHRLLSAATDECNKKLGQACSSSLSPVHNFLNVQPEHRKTPFIRSQSPDSPGQLWPKNSSQSTFSRSSTFCTNLYLSSSSTSETQKHLGNSLPFLPDPSSYTHSASGVESARSPSIFTEDLGNQCDGGNSGSLLKDFLNLSGDACSDGDFHDFGCSNDSYCLSDQMELQFLSDELELAITDRAETPRLDEIYETPLASNPVTRLSPSQSCVPGAMSVDVVSSHPSPGSAANQKSRMRWTPELHESFVKAVIKLEGPEKATPKAVKKLMNVEGLTIYHVKSHLQKYRLAKYMPEKKEEKRTDNSEEKKLALSKSEADEKKKGAIQLTEALRMQMEVQKQLHEQLEVQRVLQLRIEEHAKYLEKMLEEQRKTGRWISSSSQTVLSPSDDSIPDSQNMSKTKASSPQPPLPAENKASETEDDKCESPQKRRRLENIAESEDPKR.

Residues 49-72 (PFIRSQSPDSPGQLWPKNSSQSTF) are disordered. The HTH myb-type domain maps to 238 to 298 (ANQKSRMRWT…HLQKYRLAKY (61 aa)). Residues 269–294 (PKAVKKLMNVEGLTIYHVKSHLQKYR) constitute a DNA-binding region (H-T-H motif). The tract at residues 301 to 327 (EKKEEKRTDNSEEKKLALSKSEADEKK) is disordered. The tract at residues 334–354 (TEALRMQMEVQKQLHEQLEVQ) is coiled coil. The LHEQLE motif lies at 347–352 (LHEQLE). The interval 376 to 449 (RKTGRWISSS…NIAESEDPKR (74 aa)) is disordered. A compositionally biased stretch (polar residues) spans 381–410 (WISSSSQTVLSPSDDSIPDSQNMSKTKASS).

This sequence belongs to the MYB-CC family.

It is found in the nucleus. The sequence is that of Myb family transcription factor PHL6 from Arabidopsis thaliana (Mouse-ear cress).